We begin with the raw amino-acid sequence, 398 residues long: DnaJ-like protein R260 (398 aa).

The J domain occupies 7–72; the sequence is DLYEILGLTP…EKRRVYDQYG (66 aa). Residues 118-202 form a CR-type zinc finger; sequence KKTVKVTITV…CKGAGINKSE (85 aa). CXXCXGXG motif repeat units follow at residues 131 to 138, 147 to 154, 173 to 180, and 190 to 197; these read CDDCDATG, CKVCRGKG, CHGCQGKK, and CPSCKGAG. The disordered stretch occupies residues 364–398; that stretch reads LRQINTDPSDESQDRDSEESYGGHGRPEGVGCAQQ. A compositionally biased stretch (acidic residues) spans 371 to 382; that stretch reads PSDESQDRDSEE.

The cofactor is Zn(2+).

The chain is DnaJ-like protein R260 from Acanthamoeba polyphaga mimivirus (APMV).